The sequence spans 509 residues: 3-isopropylmalate dehydratase large subunit, chloroplastic (509 aa).

Low complexity predominate over residues 1–24; it reads MASVISSSPFLCKSSSKSDLGISS. The segment at 1 to 25 is disordered; the sequence is MASVISSSPFLCKSSSKSDLGISSF. Residues 1–47 constitute a chloroplast transit peptide; it reads MASVISSSPFLCKSSSKSDLGISSFPKSSQISIHRCQKKSISRKIVS. [4Fe-4S] cluster is bound by residues C376, C445, and C448.

Belongs to the aconitase/IPM isomerase family. In terms of assembly, heterodimer of the large LEUC/IIL1 subunit and the small LEUD (SSU1, SSU2 or SSU3) subunits. It depends on [4Fe-4S] cluster as a cofactor. As to expression, expressed in roots, leaves, stems and flowers. Expressed at low levels in siliques.

The protein localises to the plastid. Its subcellular location is the chloroplast stroma. The enzyme catalyses (2R,3S)-3-isopropylmalate = (2S)-2-isopropylmalate. It carries out the reaction a 2-(omega-methylsulfanyl)alkylmalate = a 2-(omega-methylsulfanyl)alkylmaleate + H2O. It catalyses the reaction 2-(3-methylsulfanyl)propylmalate = 2-(2-methylsulfanyl)propylmaleate + H2O. The catalysed reaction is a 3-(omega-methylsulfanyl)alkylmalate = a 2-(omega-methylsulfanyl)alkylmaleate + H2O. The enzyme catalyses 2-(2-methylsulfanyl)ethylmalate = 2-(2-methylsulfanyl)ethylmaleate + H2O. It carries out the reaction 3-(2-methylsulfanyl)ethylmalate = 2-(2-methylsulfanyl)ethylmaleate + H2O. It catalyses the reaction 3-(3-methylsulfanyl)propylmalate = 2-(2-methylsulfanyl)propylmaleate + H2O. It participates in amino-acid biosynthesis; L-leucine biosynthesis; L-leucine from 3-methyl-2-oxobutanoate: step 2/4. Catalyzes the isomerization between 2-isopropylmalate and 3-isopropylmalate, via the formation of 2-isopropylmaleate. Functions in both the biosynthesis of leucine and in the methionine chain elongation pathway of aliphatic glucosinolate formation. The chain is 3-isopropylmalate dehydratase large subunit, chloroplastic from Arabidopsis thaliana (Mouse-ear cress).